Consider the following 272-residue polypeptide: MSEPNLNPAYTLDQAIANLQQTEDASARYYAAWWIGRFRAAQPETIAALLVALEDETDRSPDGGYPLRRNAAKALGKLGDRQVVPALIKALECEDYYVRESAAQALEGLGDARAMAPLMAKLTGGLAAAQLVEGKPHLAQPYEAIIEALGTLQAVESIGLIEPFLEHFSPKVQYAAARALFQLTGDNRYGDLLITALGGTDLQLRRSAMMDLGATGYLPGAQAIAKAFAENSLKLIALRDLWATHRQRQASSESKALSPASRQILELMDSLL.

It belongs to the CpcE/RpcE/PecE family. In terms of assembly, cpcE and CpcF associate to form a lyase.

In terms of biological role, required for the chromophorylation of the CpcA gene product. In Synechocystis sp. (strain ATCC 27184 / PCC 6803 / Kazusa), this protein is Phycocyanobilin lyase subunit alpha (cpcE).